The primary structure comprises 1026 residues: Exportin-T (1026 aa).

It belongs to the exportin family.

It localises to the nucleus. The protein resides in the cytoplasm. TRNA nucleus export receptor which facilitates tRNA translocation across the nuclear pore complex. Involved in pre-tRNA splicing, probably by affecting the interaction of pre-tRNA with splicing endonuclease. This chain is Exportin-T (los1), found in Aspergillus oryzae (strain ATCC 42149 / RIB 40) (Yellow koji mold).